The sequence spans 329 residues: Peroxidase 50 (329 aa).

Residues 1 to 25 (MVVVNKTNLLLLLLSLCLTLDLSSA) form the signal peptide. Intrachain disulfides connect Cys-36–Cys-119, Cys-69–Cys-74, Cys-125–Cys-325, and Cys-204–Cys-236. His-67 acts as the Proton acceptor in catalysis. Asp-68, Val-71, Gly-73, Asp-75, and Ser-77 together coordinate Ca(2+). Pro-167 lines the substrate pocket. His-197 is a binding site for heme b. A Ca(2+)-binding site is contributed by Thr-198. N-linked (GlcNAc...) asparagine glycosylation occurs at Asn-215. Ca(2+) contacts are provided by Asp-249, Thr-252, and Asp-257.

Belongs to the peroxidase family. Classical plant (class III) peroxidase subfamily. Heme b serves as cofactor. Requires Ca(2+) as cofactor. As to expression, expressed in roots and leaves.

It is found in the secreted. It catalyses the reaction 2 a phenolic donor + H2O2 = 2 a phenolic radical donor + 2 H2O. Functionally, removal of H(2)O(2), oxidation of toxic reductants, biosynthesis and degradation of lignin, suberization, auxin catabolism, response to environmental stresses such as wounding, pathogen attack and oxidative stress. These functions might be dependent on each isozyme/isoform in each plant tissue. Exhibits a Ca(2+)-pectate binding affinity which could be interpreted in vivo as a specificity to interact with the pectic structure of the cell wall. This is Peroxidase 50 (PER50) from Arabidopsis thaliana (Mouse-ear cress).